The following is a 56-amino-acid chain: Large ribosomal subunit protein bL32 (56 aa).

Belongs to the bacterial ribosomal protein bL32 family.

The sequence is that of Large ribosomal subunit protein bL32 from Prochlorococcus marinus (strain MIT 9215).